The following is a 142-amino-acid chain: Type 3 secretion system pilotin (142 aa).

The N-terminal stretch at M1 to G23 is a signal peptide. The N-palmitoyl cysteine moiety is linked to residue C24. C24 carries S-diacylglycerol cysteine lipidation.

It belongs to the MxiM family. As to quaternary structure, monomer. Interacts with the secretin MxiD/SctC.

The protein resides in the cell outer membrane. Involved in the synthesis of the type III secretion system (T3SS), also called injectisome, which is used to inject bacterial effector proteins into eukaryotic host cells. Pilot protein that is required for the proper localization of the secretin MxiD/SctC in the outer membrane. Also influences both MxiD/SctC multimerization and stability. Required for both Ipa translocation and tissue culture cell invasion. Binds lipids. The chain is Type 3 secretion system pilotin from Shigella flexneri.